Here is a 114-residue protein sequence, read N- to C-terminus: uncharacterized protein (114 aa).

It to M.jannaschii MJ0310 and MJ0714.

This is an uncharacterized protein from Methanocaldococcus jannaschii (strain ATCC 43067 / DSM 2661 / JAL-1 / JCM 10045 / NBRC 100440) (Methanococcus jannaschii).